Reading from the N-terminus, the 397-residue chain is P2X purinoceptor 3 (397 aa).

The Cytoplasmic portion of the chain corresponds to 1–20 (MNCISDFFTYETTKSVVVKS). Residues 21–43 (WTIGIINRAVQLLIISYFVGWVF) form a helical membrane-spanning segment. The Extracellular segment spans residues 44 to 322 (LHEKAYQVRD…AGKFNIIPTI (279 aa)). The ATP site is built by Lys-63 and Lys-65. 3 cysteine pairs are disulfide-bonded: Cys-107/Cys-153, Cys-116/Cys-137, and Cys-122/Cys-147. Position 111 (Glu-111) interacts with Mg(2+). Residue Asn-139 is glycosylated (N-linked (GlcNAc...) asparagine). Residue Asp-158 coordinates Mg(2+). Position 158 (Asp-158) interacts with Ca(2+). A glycan (N-linked (GlcNAc...) asparagine) is linked at Asn-170. Thr-172 lines the ATP pocket. Asn-194 carries N-linked (GlcNAc...) asparagine glycosylation. Cystine bridges form between Cys-203/Cys-213 and Cys-247/Cys-256. ATP-binding residues include Ser-275, Asn-279, and Arg-281. A glycan (N-linked (GlcNAc...) asparagine) is linked at Asn-290. Lys-299 lines the ATP pocket. A helical transmembrane segment spans residues 323–341 (ISSVAAFTSVGVGTVLCDI). Over 342–397 (ILLNFLKGADHYKARKFEEVTETTLKGTASTNPVFTSDQATVEKQSTDSGAYSIGH) the chain is Cytoplasmic.

The protein belongs to the P2X receptor family. Homotrimer. Forms heterotrimer with P2RX2. Heterotrimeric P2RX2/3 has a ligand dose-response profile that is distinct from either homotrimeric P2RX2 or P2RX3.

It localises to the cell membrane. The catalysed reaction is Ca(2+)(in) = Ca(2+)(out). It catalyses the reaction Na(+)(in) = Na(+)(out). Its activity is regulated as follows. Has high sensitivity to ATP. Fast activation by external ATP. Exhibits rapid desensitization. Sensitives to the ATP agonist:alpha/beta-methylene-ATP. Subject to allosteric inhibition by AF-219. Mg(2+) and Ca(2+) slow deactivation of P2RX3. Functionally, extracellular ATP-activated non-selective cation channel. Plays particularly important role in sensory neurons where its activation is critical for gustatory, nociceptive responses, visceral reflexes and sensory hypersensitization. The polypeptide is P2X purinoceptor 3 (P2rx3) (Mus musculus (Mouse)).